We begin with the raw amino-acid sequence, 561 residues long: Putative periplasmic trehalase (561 aa).

The first 30 residues, Met-1–Ala-30, serve as a signal peptide directing secretion. Substrate-binding positions include Arg-148, Trp-155 to Asp-156, Asn-192, Arg-201 to Gln-203, Arg-273 to Glu-275, and Gly-306. Catalysis depends on proton donor/acceptor residues Asp-308 and Glu-492. Glu-507 contributes to the substrate binding site. Residues Cys-535–Pro-561 form a disordered region.

It belongs to the glycosyl hydrolase 37 family. As to quaternary structure, monomer.

The protein resides in the periplasm. The catalysed reaction is alpha,alpha-trehalose + H2O = alpha-D-glucose + beta-D-glucose. In terms of biological role, provides the cells with the ability to utilize trehalose at high osmolarity by splitting it into glucose molecules that can subsequently be taken up by the phosphotransferase-mediated uptake system. This is Putative periplasmic trehalase from Escherichia coli O157:H7.